The chain runs to 273 residues: Mediator of RNA polymerase II transcription subunit 27 (273 aa).

The protein belongs to the Mediator complex subunit 27 family. Component of the Mediator complex.

It localises to the nucleus. Functionally, component of the Mediator complex, a coactivator involved in the regulated transcription of nearly all RNA polymerase II-dependent genes. Mediator functions as a bridge to convey information from gene-specific regulatory proteins to the basal RNA polymerase II transcription machinery. Mediator is recruited to promoters by direct interactions with regulatory proteins and serves as a scaffold for the assembly of a functional preinitiation complex with RNA polymerase II and the general transcription factors. In Schizosaccharomyces pombe (strain 972 / ATCC 24843) (Fission yeast), this protein is Mediator of RNA polymerase II transcription subunit 27 (med27).